A 490-amino-acid chain; its full sequence is Bifunctional dihydrocamalexate synthase/camalexin synthase (490 aa).

A helical membrane pass occupies residues 1–21 (MSVFLCFLVLLPLILIFLNVL).

The protein belongs to the cytochrome P450 family.

Its subcellular location is the membrane. It catalyses the reaction 2-(L-cystein-S-yl)-2-(1H-indol-3-yl)-acetonitrile + 2 reduced [NADPH--hemoprotein reductase] + 2 O2 = camalexin + hydrogen cyanide + 2 oxidized [NADPH--hemoprotein reductase] + CO2 + 4 H2O + 2 H(+). The catalysed reaction is 2-(L-cystein-S-yl)-2-(1H-indol-3-yl)-acetonitrile + reduced [NADPH--hemoprotein reductase] + O2 = (R)-dihydrocamalexate + hydrogen cyanide + oxidized [NADPH--hemoprotein reductase] + 2 H2O + 2 H(+). The enzyme catalyses (R)-dihydrocamalexate + reduced [NADPH--hemoprotein reductase] + O2 = camalexin + oxidized [NADPH--hemoprotein reductase] + CO2 + 2 H2O. Multifunctional enzyme involved in the biosynthesis of the indole-derived phytoalexin camalexin. Catalyzes two reactions, the formation of dihydrocamalexate from indole-3-acetonitrile-cysteine conjugate and the oxidative decarboxylation of dihydrocamalexate which is the final step in camalexin biosynthesis. Required for the resistance to the fungal pathogens A.brassicicola, B.cinerea, B.elliptica, B.tulipae, L.maculans and Colletotrichum higginsianum. Seems not to be required for resistance to P.syringae, P.porri, and not involved in age-related resistance. This chain is Bifunctional dihydrocamalexate synthase/camalexin synthase (CYP71B15), found in Arabidopsis thaliana (Mouse-ear cress).